Consider the following 962-residue polypeptide: SH3 domain-binding protein 4 (962 aa).

The 60-residue stretch at glycine 55–tyrosine 114 folds into the SH3 1 domain. A phosphoserine mark is found at serine 131, serine 245, serine 250, serine 278, and serine 295. The 138-residue stretch at threonine 316 to valine 453 folds into the ZU5 domain. Serine 636 bears the Phosphoserine mark. The SH3 2 domain maps to serine 653–lysine 723.

In terms of assembly, homodimer or homooligomer. Interacts with DNM2, EPS15, clathrin, the adapter protein complex 2/AP-2 and TFRC. Interacts with the Rag GTPases RRAGA, RRAGB, RRAGC and RRAGD; the interaction is most probably direct, preferentially occurs with their inactive GDP-bound form and is negatively regulated by amino acids. Post-translationally, phosphorylated upon EGF stimulation. Phosphorylation prevents interaction with DNM2.

Its subcellular location is the membrane. The protein localises to the clathrin-coated pit. It localises to the cytoplasmic vesicle. It is found in the clathrin-coated vesicle. The protein resides in the nucleus. May function in transferrin receptor internalization at the plasma membrane through a cargo-specific control of clathrin-mediated endocytosis. Alternatively, may act as a negative regulator of the amino acid-induced TOR signaling by inhibiting the formation of active Rag GTPase complexes. Preferentially binds inactive Rag GTPase complexes and prevents their interaction with the mTORC1 complex inhibiting its relocalization to lysosomes and its activation. Thereby, may indirectly regulate cell growth, proliferation and autophagy. This Mus musculus (Mouse) protein is SH3 domain-binding protein 4 (Sh3bp4).